A 432-amino-acid polypeptide reads, in one-letter code: PC-esterase domain-containing protein 1B (432 aa).

Disordered stretches follow at residues 264-293 and 398-432; these read EWIKKKKPGPRVEGPPQANRNHPALPLSPP and RGFGRYRPRGPYTPWGQRPRPSKRRAPANPEPRPQ.

Belongs to the PC-esterase family.

The chain is PC-esterase domain-containing protein 1B from Homo sapiens (Human).